Here is a 163-residue protein sequence, read N- to C-terminus: Staphylokinase (163 aa).

Residues 1-27 form the signal peptide; sequence MLKRSLLFLTVLLLLFSFSSITNEVSA.

The protein belongs to the staphylokinase family.

The protein localises to the secreted. Its function is as follows. Potent plasminogen activator that converts plasminogen into plasmin. It forms a 1:1 complex with plasmin, which in turn activates other plasminogen molecules. The polypeptide is Staphylokinase (sak) (Staphylococcus aureus (strain MW2)).